A 95-amino-acid polypeptide reads, in one-letter code: Mitochondrial import inner membrane translocase subunit Tim13 (95 aa).

Met1 carries the N-acetylmethionine modification. Ser7 carries the phosphoserine modification. Residues Cys46–Cys69 carry the Twin CX3C motif motif. Disulfide bonds link Cys46–Cys69 and Cys50–Cys65. The residue at position 53 (Lys53) is an N6-succinyllysine.

Belongs to the small Tim family. Heterohexamer; composed of 3 copies of TIMM8 (TIMM8A or TIMM8B) and 3 copies of TIMM13, named soluble 70 kDa complex. Associates with the TIM22 complex, whose core is composed of TIMM22. Present at high level in liver and brain, and at lower level in muscle and heart. In CNS sections, it is predominantly present in the soma and the dendritic portion of the Purkinje cells of the cerebellum, but not in the glial cells. Scattered expression also is also detected in the brain stem, olfactory bulb, substantia nigra, hippocampus and striatum (at protein level).

It is found in the mitochondrion inner membrane. In terms of biological role, mitochondrial intermembrane chaperone that participates in the import and insertion of some multi-pass transmembrane proteins into the mitochondrial inner membrane. Also required for the transfer of beta-barrel precursors from the TOM complex to the sorting and assembly machinery (SAM complex) of the outer membrane. Acts as a chaperone-like protein that protects the hydrophobic precursors from aggregation and guide them through the mitochondrial intermembrane space. The TIMM8-TIMM13 complex mediates the import of proteins such as TIMM23, SLC25A12/ARALAR1 and SLC25A13/ARALAR2, while the predominant TIMM9-TIMM10 70 kDa complex mediates the import of much more proteins. The sequence is that of Mitochondrial import inner membrane translocase subunit Tim13 (Timm13) from Mus musculus (Mouse).